The following is a 63-amino-acid chain: Muscarinic toxin 2 (63 aa).

4 cysteine pairs are disulfide-bonded: Cys-3/Cys-22, Cys-17/Cys-42, Cys-44/Cys-55, and Cys-56/Cys-61.

This sequence belongs to the three-finger toxin family. Short-chain subfamily. Type B muscarinic toxin sub-subfamily. As to quaternary structure, monomer. In terms of tissue distribution, expressed by the venom gland.

It is found in the secreted. Functionally, blocks M2 muscarinic acetylcholine receptors (CHRM2). Fully blocks the binding of N-methylscopolamine (NMS) and oxotremorine-M to M2 receptors, slightly increased NMS binding to M1 receptors. This is Muscarinic toxin 2 from Dendroaspis angusticeps (Eastern green mamba).